We begin with the raw amino-acid sequence, 1440 residues long: Bridge-like lipid transfer protein family member 3A (1440 aa).

Residues 3 to 95 (GIIKKQILKH…KVEVEMKTCE (93 aa)) form the Chorein N-terminal domain. 3 disordered regions span residues 267-307 (SAHQ…NSSS), 430-456 (ADSL…FQPP), and 751-780 (KPSA…TEHD). Positions 287-307 (SAQQSWAQAFGGSQGNSNSSS) are enriched in low complexity. Ser-444, Ser-446, Ser-755, and Ser-758 each carry phosphoserine. Residues 837–860 (ALLRLKEVLQRLQEQLTKDTESMT) adopt a coiled-coil conformation. Positions 891–1008 (VDADSAGSDS…ETAVNGQGEL (118 aa)) are disordered. Positions 911 to 920 (SEDRELKSDA) are enriched in basic and acidic residues. Low complexity predominate over residues 985-995 (ASSSPAALKPP). Ser-988, Ser-1103, and Ser-1106 each carry phosphoserine. A disordered region spans residues 1106-1180 (SFDGVSLDSS…SPAANSSVSP (75 aa)). A compositionally biased stretch (low complexity) spans 1134–1150 (LLESESGPESVPPGSLS). The span at 1151–1180 (NVSDNAGVQGSPLVNNYGQGSPAANSSVSP) shows a compositional bias: polar residues. Positions 1401 to 1435 (KELPILQKELIETKQALANANQDKEKLLQEIRKYN) form a coiled coil.

In terms of assembly, homodimer (Potential). Interacts with UHRF1.

The protein resides in the late endosome. In terms of biological role, tube-forming lipid transport protein which probably mediates the transfer of lipids between membranes at organelle contact sites. May be involved in the retrograde traffic of vesicle clusters in the endocytic pathway to the Golgi complex. This is Bridge-like lipid transfer protein family member 3A from Homo sapiens (Human).